We begin with the raw amino-acid sequence, 113 residues long: Protein FAM27E3 (113 aa).

The disordered stretch occupies residues 1-113; the sequence is MGIFQLLRDR…YTHRHTHRVL (113 aa). Basic and acidic residues predominate over residues 77–99; sequence QTDRERERNTQRLRDRERRENGR. Basic residues predominate over residues 100-113; sequence HTHTYTHRHTHRVL.

It belongs to the FAM27 family.

The polypeptide is Protein FAM27E3 (FAM27E3) (Homo sapiens (Human)).